The chain runs to 546 residues: MHRWTVFNEEINGNLVRVRPVGSVCHGIEFDEMACASVKSSTHNSLWRISEPGALQATNWESEHGFGSCVIDSSKDTPCRQGRIPYYAVMAQTPQHIQTAIQFARHHNLRVAIRNTGHDAIGRSSGRGSLQINVSGLKGIHFLDDFIPQGGYESQGQAVTVGAGVLGIELLTASRIQGVNVVTGTCSSVAATGGYLQGGGTSMLGPAYGMASDNALEFHVITAMGDTIVVNQYQNTDLFWSLRGGGGGTFGVVVNTTIRTFPDVPAVHFLLSSTIHRDTETSLDAEQSLWEITAEIAKLLPDLKRFNNATSSIIVPIRMEDRVTVTAEILLVNTSDIHSAGTYFTRLIKTLDSQGFPYTSNLTLYPQLSTYLSQQRVLDRAGYGIIEGSVLVSEDLFFHPDGISDIMLVLSSLQLEVGDSVEIFMCAGGQVKANKGRVTTALLPTWREAVLLLTIRRTLPPSSMIQRMRNSQLPRLRSLESPYLGSYLNVADPDEPDFRKAFWGDHYSRLYQIKHDRDPNGLFIVRIGVGSEDWDMDGICQFSKMQ.

Residues 81 to 263 form the FAD-binding PCMH-type domain; that stretch reads QGRIPYYAVM…VNTTIRTFPD (183 aa).

This sequence belongs to the oxygen-dependent FAD-linked oxidoreductase family.

Functionally, nonribosomal peptide synthetase that mediates the biosynthesis of usterphenyllins and uscandidusins, p-terphenyl derivatives. The function of ucdF within the pathway still remains to be determined. UcdE further prenylates position C-14 of ring C of usterphenyllin B to form usterphenyllin A. The pathway begin with the biosynthesis of 4-hydroxyphenylpyruvate (HPPA) from L-tyrosine, possibly by the aminotransferase ucdG. The nonribosomal peptide synthetase ucdA then condenses two HPPA units to produce atromentin. The key step in this pathway is the reduction and dehydration of atromentin to form a terphenyl triol intermediate, performed by the NAD-dependent dehydrogenase ucdB. Further O-methylation by the methyltransferase ucdC forms terphenyllin carrying two methoxy moieties at C-9 and C-12, and subsequent dihydroxylation at C-3 of ring A and C-15 of ring C by the flavin-dependent oxygenase ucdD leads to 3,15-dihydroxyterphenyllin. Prenylation by ucdE at position C-5 of ring A forms usterphenyllin B, and is followed by a second prenylation at position C-14 of ring C to form usterphenyllin A. The following furan ring formation that leads to uscandidusins A and B was proven to be an unexpected spontaneous non-enzymatic reaction. This Aspergillus ustus protein is Flavin-dependent oxygenase ucdF.